We begin with the raw amino-acid sequence, 388 residues long: Omega-hydroxy-beta-dihydromenaquinone-9 sulfotransferase Stf3 (388 aa).

It belongs to the Stf3 family.

The catalysed reaction is omega-hydroxy-beta-dihydromenaquinone-9 + 3'-phosphoadenylyl sulfate = omega-sulfo-beta-dihydromenaquinone-9 + adenosine 3',5'-bisphosphate + H(+). Involved in the biosynthesis of sulfomenaquinone (SMK, initially named S881 on the basis of its mass), which is localized in the outer envelope of M.bovis and negatively regulates its virulence. Catalyzes the transfer of a sulfonate group from 3'-phosphoadenosine-5'-phosphosulfate (PAPS) to omega-hydroxy-beta-dihydromenaquinone-9, generating omega-sulfo-beta-dihydromenaquinone-9 (sulfomenaquinone). This Mycobacterium bovis (strain ATCC BAA-935 / AF2122/97) protein is Omega-hydroxy-beta-dihydromenaquinone-9 sulfotransferase Stf3.